Consider the following 464-residue polypeptide: ATP synthase subunit beta (464 aa).

Position 153–160 (153–160 (GGAGVGKT)) interacts with ATP.

This sequence belongs to the ATPase alpha/beta chains family. As to quaternary structure, F-type ATPases have 2 components, CF(1) - the catalytic core - and CF(0) - the membrane proton channel. CF(1) has five subunits: alpha(3), beta(3), gamma(1), delta(1), epsilon(1). CF(0) has three main subunits: a(1), b(2) and c(9-12). The alpha and beta chains form an alternating ring which encloses part of the gamma chain. CF(1) is attached to CF(0) by a central stalk formed by the gamma and epsilon chains, while a peripheral stalk is formed by the delta and b chains.

It is found in the cell membrane. It carries out the reaction ATP + H2O + 4 H(+)(in) = ADP + phosphate + 5 H(+)(out). Produces ATP from ADP in the presence of a proton gradient across the membrane. The catalytic sites are hosted primarily by the beta subunits. This chain is ATP synthase subunit beta, found in Clostridium novyi (strain NT).